The following is a 48-amino-acid chain: Large ribosomal subunit protein bL33B (48 aa).

It belongs to the bacterial ribosomal protein bL33 family.

This Mycoplasma genitalium (strain ATCC 33530 / DSM 19775 / NCTC 10195 / G37) (Mycoplasmoides genitalium) protein is Large ribosomal subunit protein bL33B (rpmG2).